We begin with the raw amino-acid sequence, 435 residues long: Methylenetetrahydrofolate--tRNA-(uracil-5-)-methyltransferase TrmFO (435 aa).

9-14 provides a ligand contact to FAD; it reads GAGLAG.

Belongs to the MnmG family. TrmFO subfamily. Requires FAD as cofactor.

The protein localises to the cytoplasm. It catalyses the reaction uridine(54) in tRNA + (6R)-5,10-methylene-5,6,7,8-tetrahydrofolate + NADH + H(+) = 5-methyluridine(54) in tRNA + (6S)-5,6,7,8-tetrahydrofolate + NAD(+). It carries out the reaction uridine(54) in tRNA + (6R)-5,10-methylene-5,6,7,8-tetrahydrofolate + NADPH + H(+) = 5-methyluridine(54) in tRNA + (6S)-5,6,7,8-tetrahydrofolate + NADP(+). Its function is as follows. Catalyzes the folate-dependent formation of 5-methyl-uridine at position 54 (M-5-U54) in all tRNAs. This is Methylenetetrahydrofolate--tRNA-(uracil-5-)-methyltransferase TrmFO from Staphylococcus saprophyticus subsp. saprophyticus (strain ATCC 15305 / DSM 20229 / NCIMB 8711 / NCTC 7292 / S-41).